Reading from the N-terminus, the 835-residue chain is Involucrin (835 aa).

Polar residues predominate over residues 1 to 15 (MSQQHTLPVTLSPAL). Disordered regions lie at residues 1–133 (MSQQ…LDQR), 150–206 (EQLL…LEVP), 221–285 (GQLK…QLKH), 321–342 (GQLKHLDQQEGQLELPEQQEGQ), 381–428 (GQLK…VPEE), 446–486 (LDQQ…LEVP), 501–548 (GQLK…VPEE), and 566–809 (LDQQ…QPAL). The span at 76 to 91 (EQQQQEPQEQELQQQH) shows a compositional bias: low complexity. Composition is skewed to basic and acidic residues over residues 92 to 115 (WEQHEEHQKAENPEQQLKQEKAQR) and 159 to 168 (QEQHLKHLEQ). Low complexity predominate over residues 169 to 181 (QEGQLELPEQQEG). Composition is skewed to basic and acidic residues over residues 182-198 (QLKHLEQQEGQLKHLEQ) and 222-268 (QLKH…HLDQ). Composition is skewed to low complexity over residues 269 to 281 (QEGQLELPEQQEG), 329 to 341 (QEGQLELPEQQEG), and 389 to 401 (QEGQLELPEQQEG). 2 stretches are compositionally biased toward basic and acidic residues: residues 402–421 (QLKHLEQQEGQLKHLEHQEG) and 446–464 (LDQQEGQLKHLDQQEKQLE). The span at 509–521 (QEGQLELPEQQEG) shows a compositional bias: low complexity. 3 stretches are compositionally biased toward basic and acidic residues: residues 522–541 (QLKHLEQQEGQLKHLEHQEG), 566–584 (LDQQEGQLKHLDQQEKQLE), and 594–620 (KHLEQQEGQLEHLEGQEGQLEHLEHQE). The span at 655–668 (HLVQQEGQLEQQEG) shows a compositional bias: low complexity. Residues 669-685 (QVEHLEEQVGQLKHLEE) show a composition bias toward basic and acidic residues. Positions 693 to 710 (LEQQQGQLEVPEQQVGQP) are enriched in low complexity. 3 stretches are compositionally biased toward basic and acidic residues: residues 711 to 721 (KHLEQEEKQLE), 729 to 738 (QLKHLEKQEA), and 751 to 775 (KHLEQQEKQLEHPEQKDGQLKHLEQ). Over residues 776–789 (QEGQLKNLEQQKGQ) the composition is skewed to polar residues.

This sequence belongs to the involucrin family. In terms of assembly, directly or indirectly cross-linked to cornifelin (CNFN). Post-translationally, substrate of transglutaminase. Specific glutamines or lysines are cross-linked to keratins, desmoplakin and to inter involucrin molecules. As to expression, keratinocytes of epidermis and other stratified squamous epithelia.

It is found in the cytoplasm. Its function is as follows. Part of the insoluble cornified cell envelope (CE) of stratified squamous epithelia. The polypeptide is Involucrin (IVL) (Pongo pygmaeus (Bornean orangutan)).